We begin with the raw amino-acid sequence, 177 residues long: CDP-diacylglycerol--serine O-phosphatidyltransferase (177 aa).

The next 5 membrane-spanning stretches (helical) occupy residues 4-24 (IPCM…HSLL), 28-48 (IHSA…DGMA), 77-97 (MLAY…CALT), 116-136 (LPTF…ILSF), and 140-160 (PILL…KIKF).

It belongs to the CDP-alcohol phosphatidyltransferase class-I family.

It is found in the cell membrane. The enzyme catalyses a CDP-1,2-diacyl-sn-glycerol + L-serine = a 1,2-diacyl-sn-glycero-3-phospho-L-serine + CMP + H(+). The polypeptide is CDP-diacylglycerol--serine O-phosphatidyltransferase (pssA) (Bacillus subtilis (strain 168)).